Consider the following 449-residue polypeptide: UNC93-like protein MFSD11 (449 aa).

A helical transmembrane segment spans residues Leu-8–Cys-28. The N-linked (GlcNAc...) asparagine glycan is linked to Asn-40. The next 5 membrane-spanning stretches (helical) occupy residues Ala-53–Val-73, Gly-74–Asn-94, Pro-96–Trp-116, Ile-138–Trp-158, and Arg-170–Ile-190. Ser-204 is modified (phosphoserine). 6 consecutive transmembrane segments (helical) span residues Met-239–Val-259, Leu-277–Gly-297, Pro-309–Met-329, Phe-359–Leu-379, Ala-385–Tyr-405, and Leu-410–Phe-430.

It belongs to the unc-93 family.

The protein resides in the membrane. This chain is UNC93-like protein MFSD11 (MFSD11), found in Pongo abelii (Sumatran orangutan).